Reading from the N-terminus, the 629-residue chain is Methionine--tRNA ligase (629 aa).

Residues 10-20 carry the 'HIGH' region motif; the sequence is YYVNSEPHIGS. Residues cysteine 125, cysteine 128, cysteine 146, and cysteine 149 each contribute to the Zn(2+) site. Positions 297-301 match the 'KMSKS' region motif; the sequence is KISKS. Position 300 (lysine 300) interacts with ATP. Residues 529–629 enclose the tRNA-binding domain; the sequence is DFSKVDLRIA…GEITPGAKVS (101 aa).

It belongs to the class-I aminoacyl-tRNA synthetase family. MetG type 2A subfamily. As to quaternary structure, homodimer. The cofactor is Zn(2+).

It is found in the cytoplasm. It carries out the reaction tRNA(Met) + L-methionine + ATP = L-methionyl-tRNA(Met) + AMP + diphosphate. In terms of biological role, is required not only for elongation of protein synthesis but also for the initiation of all mRNA translation through initiator tRNA(fMet) aminoacylation. The chain is Methionine--tRNA ligase (metG) from Thermotoga maritima (strain ATCC 43589 / DSM 3109 / JCM 10099 / NBRC 100826 / MSB8).